We begin with the raw amino-acid sequence, 196 residues long: Thymidylate kinase (196 aa).

7-14 contributes to the ATP binding site; the sequence is GIDGSGKT.

Belongs to the thymidylate kinase family.

It carries out the reaction dTMP + ATP = dTDP + ADP. Phosphorylation of dTMP to form dTDP in both de novo and salvage pathways of dTTP synthesis. The chain is Thymidylate kinase from Wolbachia pipientis wMel.